A 446-amino-acid polypeptide reads, in one-letter code: Na(+)-translocating NADH-quinone reductase subunit A (446 aa).

It belongs to the NqrA family. As to quaternary structure, composed of six subunits; NqrA, NqrB, NqrC, NqrD, NqrE and NqrF.

It catalyses the reaction a ubiquinone + n Na(+)(in) + NADH + H(+) = a ubiquinol + n Na(+)(out) + NAD(+). NQR complex catalyzes the reduction of ubiquinone-1 to ubiquinol by two successive reactions, coupled with the transport of Na(+) ions from the cytoplasm to the periplasm. NqrA to NqrE are probably involved in the second step, the conversion of ubisemiquinone to ubiquinol. This is Na(+)-translocating NADH-quinone reductase subunit A from Vibrio campbellii (strain ATCC BAA-1116).